We begin with the raw amino-acid sequence, 1785 residues long: MLPESVFLLLISHFLRAVTQPPFETEGVKQKLFHFSGHIDDFIVSRDQQTIYVASLNRLTSLSISNFSIQHEVSLGPVQDSPWCSADGKSCLKDNRPFPTDVRTKILQILPTNQILQCGSVKLGSCSTFNSKLSLITESTIAVAANSPDASTVSKIIDNRLIVAASATKESPYRDPFPAVAIRNLPGLNVENAGDLEGEAAVFLRAAYKNAFKFLYTFTHQHFVFVVAMVTPRESRLPMTTRLIRFCRNDTKFESYSEIELQCRGEDNTNYPFLNAIIQSYDKLIASFSTSSTSPKSSICVFSMQKVKLTFWYNVDRCRSGTDSIRLPHIGRDTKCVNKAHIPLDEDSCELGVGGSIELVEMSTKDIMGKVTSLMAVDQKAIFAGTTTSQIVMFKWDEHHSNQLEEYGRKEVGDGRTGSEVSKMVKFGDFVIVQMPYGIILEELSTCSHHSSCTECLVSVDPLCQWCHPTQSCTTSARCTSPVTSQCPIVDGDPIPSIVSVNSSTPISFNIHHLPPPVGFTYRCQFGTSTSSIKANWTTTGVSCPSEIFTSPNTFEILLLTSISNNPISRHNFTVYDCSGYGTCSSCMSSEYNCAWCSGLHKCSNSCGALEKSKACVKIQPMRLPIAIGSQQEIVLEASNLDTLDRRHEHFCKVNEQVSLAKIASDSIRCGKIQLTLSNTTSANMVVPLSLITRDSVIDIANVSLYSCTNLASDCSSCLALSPSLSCGWCNRQCSHECHESKATAVCDPPRIDKFEPTSGPIEGGTIIKIYGNDLGMSVEDVRGKIYVAGSRCNIVEYHVSNMIACQVDKGVSSGPIRISVGRATVAVAESSELYSFVRTSIFSAYPLYGPISGGTRITLYGQNLSSGSQTSVTVGGMPCPIERVNSSTVLTCLTPSGTRIGKSARVVVHVDHSQTQLDQPFEYRSDPSISSIFPMTSFKAGGRIVYVQGNSLNTVQTAKLFLISSPTPPFYIISDLAPCHIINSTLMTCMTPKILETITRRVEYTRQPVGFHMDNVTAVANLGRRIQMGIYPNPTLSPFKGVRYHQGEQSLILEGHNLNLAAEPNDFKIFIGNERCYVTLVDVRQLVCSGPVRQPKATDERGIPINGDNPLVTVIVGSLRMELGLIEYSDHALPSRLSLLILGLLLFIVVTLTVMCLVFKRRRQEREKEYRKIQLQMENLENNVRKECKQAFAELQTNLVLSPKSANSVNLGPELINFPHFVENLLWSDNNLTSAPSLARTLPVTLAQFHALLSFKGFIFTIVEAAESDVSISTSEKSMLASLLISVLLRNFSYCTEVVVDLLRAHIARSVQNKRAELLFRNSDSVVEKMFSKWMSICLYSHLTPQMNSYFYLYKALQYQTDKGPVDAVTGDARYTINEAKLLRESVDTKTLKIRVIPFEKCDESIDLEVHACDAICQVKQKVASAVYRETPYSQRPRITQFELKYKCPKRGDVKLTDVLPIETLSQKKLPVKLFTLADYGISDGCTLEMSPAVYTAESYRNSLADSGQSSWSSLDRCSPIYSSSKYYHLTNPSSGTMTFKKKSSNDSNLLPKSIPEVYLTRLLTSKGTVETYVEDFLESVLYMHDSSYPPILKFFFDILDREASVNGVSENICQQWKANGYVLRVWANFVRNPQLVFDVPHSISMDANLSTVAQTMMDCFSFSEPVLGAHSPSSRLLFAKDVARLRPLSVDLFKRVKNSPPLGMDELRTELVNMANDVSTCKGSSLALSELLSWVRGNGIRISQLLSSNEQFSQQRLPQKLSQVLHVCLETDNHIYSTISDYE.

The signal sequence occupies residues 1 to 17 (MLPESVFLLLISHFLRA). A Sema domain is found at 18–444 (VTQPPFETEG…MPYGIILEEL (427 aa)). The Extracellular portion of the chain corresponds to 18–1139 (VTQPPFETEG…SDHALPSRLS (1122 aa)). A glycan (N-linked (GlcNAc...) asparagine) is linked at asparagine 66. Cystine bridges form between cysteine 84–cysteine 91, cysteine 118–cysteine 126, cysteine 247–cysteine 349, cysteine 263–cysteine 300, cysteine 318–cysteine 336, cysteine 447–cysteine 464, cysteine 453–cysteine 487, cysteine 456–cysteine 473, and cysteine 467–cysteine 479. The N-linked (GlcNAc...) asparagine glycan is linked to asparagine 249. In terms of domain architecture, PSI 1 spans 446-488 (TCSHHSSCTECLVSVDPLCQWCHPTQSCTTSARCTSPVTSQCP). N-linked (GlcNAc...) asparagine glycans are attached at residues asparagine 502, asparagine 536, and asparagine 572. Cysteine 524 and cysteine 544 are joined by a disulfide. Positions 577-617 (DCSGYGTCSSCMSSEYNCAWCSGLHKCSNSCGALEKSKACV) constitute a PSI 2 domain. 2 N-linked (GlcNAc...) asparagine glycosylation sites follow: asparagine 679 and asparagine 702. The 42-residue stretch at 707-748 (SCTNLASDCSSCLALSPSLSCGWCNRQCSHECHESKATAVCD) folds into the PSI 3 domain. IPT/TIG domains lie at 750 to 837 (PRID…LYSF), 840 to 924 (TSIF…PFEY), and 928 to 1040 (PSIS…LSPF). Asparagine 864, asparagine 886, asparagine 984, and asparagine 1016 each carry an N-linked (GlcNAc...) asparagine glycan. The chain crosses the membrane as a helical span at residues 1140–1160 (LLILGLLLFIVVTLTVMCLVF). A coiled-coil region spans residues 1159-1197 (VFKRRRQEREKEYRKIQLQMENLENNVRKECKQAFAELQ). Over 1161-1785 (KRRRQEREKE…HIYSTISDYE (625 aa)) the chain is Cytoplasmic.

Belongs to the plexin family. In terms of assembly, interacts with mab-20. As to expression, expressed predominantly in the central nervous system from embryonic to adult stages. Expressed in early embryos in ventral neuroblasts. Expressed in neurons and in a subset of posterior lateral and ventral epidermal cells following epidermal enclosure. Present in neurons, muscles and weakly expressed in epidermal cells of the larval tail.

It is found in the cell membrane. Functionally, involved as a receptor for mab-20/sema-2a in the formation or stabilization of cell-cell contacts at several stages of epithelial morphogenesis. In early embryonic development, required for proper ventral closure of the epidermis. During male tail morphogenesis, involved in precursor cell sorting and in the formation of distinct sensory rays. Involved in axon guidance of SDQL neurons during neurogenesis. Probably in response to stimulation by mab-20, regulates fln-1-mediated remodeling of the actin cytoskeleton and thus axon guidance and/or fasciculation of DD/VD neurons. This is Plexin-2 from Caenorhabditis elegans.